Reading from the N-terminus, the 161-residue chain is Large ribosomal subunit protein uL10 (161 aa).

The protein belongs to the universal ribosomal protein uL10 family. As to quaternary structure, part of the ribosomal stalk of the 50S ribosomal subunit. The N-terminus interacts with L11 and the large rRNA to form the base of the stalk. The C-terminus forms an elongated spine to which L12 dimers bind in a sequential fashion forming a multimeric L10(L12)X complex.

Forms part of the ribosomal stalk, playing a central role in the interaction of the ribosome with GTP-bound translation factors. The polypeptide is Large ribosomal subunit protein uL10 (Campylobacter curvus (strain 525.92)).